A 429-amino-acid chain; its full sequence is Glutamate-1-semialdehyde 2,1-aminomutase 2 (429 aa).

N6-(pyridoxal phosphate)lysine is present on Lys-268.

It belongs to the class-III pyridoxal-phosphate-dependent aminotransferase family. HemL subfamily. In terms of assembly, homodimer. Pyridoxal 5'-phosphate serves as cofactor.

The protein localises to the cytoplasm. The enzyme catalyses (S)-4-amino-5-oxopentanoate = 5-aminolevulinate. It functions in the pathway porphyrin-containing compound metabolism; protoporphyrin-IX biosynthesis; 5-aminolevulinate from L-glutamyl-tRNA(Glu): step 2/2. This is Glutamate-1-semialdehyde 2,1-aminomutase 2 from Bacillus mycoides (strain KBAB4) (Bacillus weihenstephanensis).